The sequence spans 207 residues: Ras-related protein Rab-7a (207 aa).

An N-acetylthreonine modification is found at Thr2. Residues Ser17, Gly18, Val19, Gly20, Lys21, Thr22, Ser23, Ser34, Asn35, Tyr37, and Thr40 each contribute to the GTP site. Thr22 is a Mg(2+) binding site. Positions 28-41 match the Switch 1 motif; sequence YVNKKFSNQYKATI. Mg(2+) is bound by residues Thr40 and Asp63. Gly66 is a binding site for GTP. A Switch 2 motif is present at residues 67–82; sequence QERFQSLGVAFYRGAD. Phosphoserine is present on Ser72. Asn125, Lys126, Asp128, Ala156, and Lys157 together coordinate GTP. Residues Lys191 and Lys194 each participate in a glycyl lysine isopeptide (Lys-Gly) (interchain with G-Cter in ubiquitin) cross-link. S-geranylgeranyl cysteine attachment occurs at residues Cys205 and Cys207. Cysteine methyl ester is present on Cys207.

It belongs to the small GTPase superfamily. Rab family. Interacts with NTRK1/TRKA, RILP, PSMA7, RNF115 and FYCO1. Interacts with the PIK3C3/VPS34-PIK3R4 complex. The GTP-bound form interacts with OSBPL1A and RAC1. Interacts with CLN3. Interacts with CHM, the substrate-binding subunit of the Rab geranylgeranyltransferase complex. Interacts with C9orf72. Does not interact with HPS4 and the BLOC-3 complex (heterodimer of HPS1 and HPS4). Interacts with CLN5. Interacts with PLEKHM1 (via N- and C-terminus). Interacts with PRPH; the interaction is direct. Interacts with VPS13A. The GDP-bound form interacts with RIMOC1. Interacts with the MON1A-CCZ1B complex and this interaction is enhanced in the presence of RIMOC1. Interacts with VPS39 and VPS41. Forms a ternary complex with LAMP2 and RUFY4; the interaction with LAMP2 is mediated by RUFY4 (via RUN and coiled coil domains). Mg(2+) serves as cofactor. Deubiquitination at Lys-191 and Lys-194 by USP32. In terms of processing, phosphorylated at Ser-72 by LRRK1; phosphorylation is dependent on protein kinase C (PKC) activation of LRRK1. Post-translationally, prenylated. Prenylation is required for association with cellular membranes. As to expression, widely expressed. High expression in liver, heart and kidney. Found in sensory and motor neurons.

The protein resides in the cytoplasmic vesicle. The protein localises to the phagosome membrane. It localises to the late endosome membrane. It is found in the lysosome membrane. Its subcellular location is the melanosome membrane. The protein resides in the autophagosome membrane. The protein localises to the lipid droplet. It localises to the endosome membrane. It is found in the mitochondrion membrane. The enzyme catalyses GTP + H2O = GDP + phosphate + H(+). With respect to regulation, regulated by guanine nucleotide exchange factors (GEFs) which promote the exchange of bound GDP for free GTP. Regulated by GTPase activating proteins (GAPs) which increase the GTP hydrolysis activity. Inhibited by GDP dissociation inhibitors (GDIs). In terms of biological role, the small GTPases Rab are key regulators of intracellular membrane trafficking, from the formation of transport vesicles to their fusion with membranes. Rabs cycle between an inactive GDP-bound form and an active GTP-bound form that is able to recruit to membranes different sets of downstream effectors directly responsible for vesicle formation, movement, tethering and fusion. In its active state, RAB7A binds to a variety of effector proteins playing a key role in the regulation of endo-lysosomal trafficking. Governs early-to-late endosomal maturation, microtubule minus-end as well as plus-end directed endosomal migration and positioning, and endosome-lysosome transport through different protein-protein interaction cascades. Also plays a central role in growth-factor-mediated cell signaling, nutrient-transporter-mediated nutrient uptake, neurotrophin transport in the axons of neurons and lipid metabolism. Also involved in regulation of some specialized endosomal membrane trafficking, such as maturation of melanosomes, pathogen-induced phagosomes (or vacuoles) and autophagosomes. Plays a role in the maturation and acidification of phagosomes that engulf pathogens, such as S.aureus and Mycobacteria. Plays a role in the fusion of phagosomes with lysosomes. In concert with RAC1, plays a role in regulating the formation of RBs (ruffled borders) in osteoclasts. Controls the endosomal trafficking and neurite outgrowth signaling of NTRK1/TRKA. Regulates the endocytic trafficking of the EGF-EGFR complex by regulating its lysosomal degradation. Involved in the ADRB2-stimulated lipolysis through lipophagy, a cytosolic lipase-independent autophagic pathway. Required for the exosomal release of SDCBP, CD63 and syndecan. Required for vesicular trafficking and cell surface expression of ACE2. May play a role in PRPH neuronal intermediate filament assembly. The chain is Ras-related protein Rab-7a from Mus musculus (Mouse).